The primary structure comprises 207 residues: Large ribosomal subunit protein bL25 (207 aa).

Residues 171–207 (ESVVTVEVPEDATESTTAPEAAAAPADAAAAPAADAK) form a disordered region. Residues 184–207 (ESTTAPEAAAAPADAAAAPAADAK) show a composition bias toward low complexity.

It belongs to the bacterial ribosomal protein bL25 family. CTC subfamily. Part of the 50S ribosomal subunit; part of the 5S rRNA/L5/L18/L25 subcomplex. Contacts the 5S rRNA. Binds to the 5S rRNA independently of L5 and L18.

Its function is as follows. This is one of the proteins that binds to the 5S RNA in the ribosome where it forms part of the central protuberance. This is Large ribosomal subunit protein bL25 from Bifidobacterium longum subsp. infantis (strain ATCC 15697 / DSM 20088 / JCM 1222 / NCTC 11817 / S12).